A 242-amino-acid chain; its full sequence is Dihydropteridine reductase (242 aa).

Leu-12–Ala-36 serves as a coordination point for NADP(+). 4 positions are modified to N6-succinyllysine: Lys-71, Lys-77, Lys-94, and Lys-100. Catalysis depends on Tyr-148, which acts as the Proton acceptor.

The protein belongs to the short-chain dehydrogenases/reductases (SDR) family. As to quaternary structure, homodimer.

The catalysed reaction is 5,6,7,8-tetrahydropteridine + NAD(+) = 6,7-dihydropteridine + NADH + H(+). It carries out the reaction 5,6,7,8-tetrahydropteridine + NADP(+) = 6,7-dihydropteridine + NADPH + H(+). In terms of biological role, catalyzes the conversion of quinonoid dihydrobiopterin into tetrahydrobiopterin. This is Dihydropteridine reductase (QDPR) from Bos taurus (Bovine).